Reading from the N-terminus, the 165-residue chain is Peptide methionine sulfoxide reductase MsrA (165 aa).

The active site involves Cys-10.

It belongs to the MsrA Met sulfoxide reductase family.

The catalysed reaction is L-methionyl-[protein] + [thioredoxin]-disulfide + H2O = L-methionyl-(S)-S-oxide-[protein] + [thioredoxin]-dithiol. The enzyme catalyses [thioredoxin]-disulfide + L-methionine + H2O = L-methionine (S)-S-oxide + [thioredoxin]-dithiol. Has an important function as a repair enzyme for proteins that have been inactivated by oxidation. Catalyzes the reversible oxidation-reduction of methionine sulfoxide in proteins to methionine. This chain is Peptide methionine sulfoxide reductase MsrA, found in Campylobacter jejuni subsp. jejuni serotype O:23/36 (strain 81-176).